A 367-amino-acid polypeptide reads, in one-letter code: Heme A synthase 2 (367 aa).

Helical transmembrane passes span methionine 28 to alanine 48, methionine 114 to glycine 134, tryptophan 143 to alanine 163, valine 180 to leucine 200, and methionine 221 to glycine 241. Residue histidine 284 participates in heme binding. Transmembrane regions (helical) follow at residues leucine 286 to aspartate 306, alanine 314 to valine 334, and isoleucine 340 to phenylalanine 360. Histidine 344 provides a ligand contact to heme.

This sequence belongs to the COX15/CtaA family. Type 2 subfamily. In terms of assembly, interacts with CtaB. Requires heme b as cofactor.

The protein resides in the cell membrane. It carries out the reaction Fe(II)-heme o + 2 A + H2O = Fe(II)-heme a + 2 AH2. The protein operates within porphyrin-containing compound metabolism; heme A biosynthesis; heme A from heme O: step 1/1. Functionally, catalyzes the conversion of heme O to heme A by two successive hydroxylations of the methyl group at C8. The first hydroxylation forms heme I, the second hydroxylation results in an unstable dihydroxymethyl group, which spontaneously dehydrates, resulting in the formyl group of heme A. The protein is Heme A synthase 2 of Acidiphilium cryptum (strain JF-5).